We begin with the raw amino-acid sequence, 230 residues long: 2,3-bisphosphoglycerate-dependent phosphoglycerate mutase 1 (230 aa).

Residues 8–15 (RHGQSEWN), 21–22 (TG), Arg60, 87–90 (ERHY), Lys98, 114–115 (RR), and 183–184 (GN) each bind substrate. The active-site Tele-phosphohistidine intermediate is His9. Glu87 functions as the Proton donor/acceptor in the catalytic mechanism.

Belongs to the phosphoglycerate mutase family. BPG-dependent PGAM subfamily.

The catalysed reaction is (2R)-2-phosphoglycerate = (2R)-3-phosphoglycerate. It functions in the pathway carbohydrate degradation; glycolysis; pyruvate from D-glyceraldehyde 3-phosphate: step 3/5. Functionally, catalyzes the interconversion of 2-phosphoglycerate and 3-phosphoglycerate. This is 2,3-bisphosphoglycerate-dependent phosphoglycerate mutase 1 from Lactobacillus johnsonii (strain CNCM I-12250 / La1 / NCC 533).